The primary structure comprises 27 residues: Protamine-A (27 aa).

Residues 1–27 (ARRRRRHASTKLKRRRRRRRHGKKSHK) form a disordered region.

In terms of tissue distribution, testis.

The protein localises to the nucleus. It localises to the chromosome. In terms of biological role, protamines substitute for histones in the chromatin of sperm during the haploid phase of spermatogenesis. They compact sperm DNA into a highly condensed, stable and inactive complex. This Acipenser stellatus (Sevruga) protein is Protamine-A.